The primary structure comprises 301 residues: Small ribosomal subunit protein uS2 (301 aa).

The protein belongs to the universal ribosomal protein uS2 family. Component of the small ribosomal subunit. Mature ribosomes consist of a small (40S) and a large (60S) subunit. The 40S subunit contains about 33 different proteins and 1 molecule of RNA (18S). The 60S subunit contains about 49 different proteins and 3 molecules of RNA (28S, 5.8S and 5S). Interacts with ribosomal protein S21.

It localises to the cytoplasm. In terms of biological role, required for the assembly and/or stability of the 40S ribosomal subunit. Required for the processing of the 20S rRNA-precursor to mature 18S rRNA in a late step of the maturation of 40S ribosomal subunits. The sequence is that of Small ribosomal subunit protein uS2 from Brugia malayi (Filarial nematode worm).